We begin with the raw amino-acid sequence, 115 residues long: Large ribosomal subunit protein bL19 (115 aa).

The protein belongs to the bacterial ribosomal protein bL19 family.

This protein is located at the 30S-50S ribosomal subunit interface and may play a role in the structure and function of the aminoacyl-tRNA binding site. This Thermotoga maritima (strain ATCC 43589 / DSM 3109 / JCM 10099 / NBRC 100826 / MSB8) protein is Large ribosomal subunit protein bL19 (rplS).